The chain runs to 354 residues: Long form salivary protein D7L3 (354 aa).

The signal sequence occupies residues 1–26; it reads MQLTPRSVHLVHLLLAATTLISPSWS.

Belongs to the PBP/GOBP family.

The protein resides in the secreted. Modulates blood feeding of female mosquitoes on vertebrate species by binding and sequestering different mediators involved in the host response. Binds serotonin with high affinity. Binds weakly noradrenaline and histamine. Does not bind tryptamine, octopamine, dopamine, adrenaline, leukotriene C4, leukotriene D4, leukotriene B4, ADP and U-46619, a stable analog of thromboxane A2. Inhibits agonist-induced platelet aggregation. Exhibits vasodilating activity. The sequence is that of Long form salivary protein D7L3 from Anopheles gambiae (African malaria mosquito).